The chain runs to 312 residues: Carbonic anhydrase 4 (312 aa).

An N-terminal signal peptide occupies residues 1–18 (MRLLLALLVLAAAPPQAR). Positions 21 to 285 (SHWCYQIQVK…LGQRQVFRSG (265 aa)) constitute an Alpha-carbonic anhydrase domain. 2 cysteine pairs are disulfide-bonded: Cys-24–Cys-36 and Cys-46–Cys-229. Asn-33 is a glycosylation site (N-linked (GlcNAc...) asparagine). Residue His-88 is the Proton donor/acceptor of the active site. 3 residues coordinate Zn(2+): His-115, His-117, and His-140. Asn-152 and Asn-195 each carry an N-linked (GlcNAc...) asparagine glycan. 225–226 (TT) lines the substrate pocket. N-linked (GlcNAc...) asparagine glycosylation occurs at Asn-265. Ser-284 carries the GPI-anchor amidated serine lipid modification. Positions 285–312 (GAPGLLLAQPLPTLLAPVLACLTVGFLR) are cleaved as a propeptide — removed in mature form.

This sequence belongs to the alpha-carbonic anhydrase family. Interacts with SLC4A4. Zn(2+) serves as cofactor.

The protein localises to the cell membrane. It carries out the reaction hydrogencarbonate + H(+) = CO2 + H2O. Inhibited by acetazolamide. Its function is as follows. Catalyzes the reversible hydration of carbon dioxide into bicarbonate and protons and thus is essential to maintaining intracellular and extracellular pH. May stimulate the sodium/bicarbonate transporter activity of SLC4A4 that acts in pH homeostasis. It is essential for acid overload removal from the retina and retina epithelium, and acid release in the choriocapillaris in the choroid. The chain is Carbonic anhydrase 4 (CA4) from Bos taurus (Bovine).